We begin with the raw amino-acid sequence, 592 residues long: A-type ATP synthase subunit A (592 aa).

233-240 (GPFGSGKT) lines the ATP pocket.

It belongs to the ATPase alpha/beta chains family. Has multiple subunits with at least A(3), B(3), C, D, E, F, H, I and proteolipid K(x).

It is found in the cell membrane. The enzyme catalyses ATP + H2O + 4 H(+)(in) = ADP + phosphate + 5 H(+)(out). Functionally, component of the A-type ATP synthase that produces ATP from ADP in the presence of a proton gradient across the membrane. The A chain is the catalytic subunit. This chain is A-type ATP synthase subunit A, found in Saccharolobus solfataricus (strain ATCC 35092 / DSM 1617 / JCM 11322 / P2) (Sulfolobus solfataricus).